Consider the following 1191-residue polypeptide: Zinc finger protein ush (1191 aa).

Disordered regions lie at residues 1–153 and 169–194; these read MLSS…PKYP and PDAKELTLPDSRLLAPPPLVKPDTQA. Residues 19–28 show a composition bias toward basic and acidic residues; it reads VDSRDSKDLS. The segment covering 61–73 has biased composition (acidic residues); it reads IDDDADEDAEFEE. Residues Ser-116 and Ser-118 each carry the phosphoserine modification. Residues 130-151 show a composition bias toward pro residues; the sequence is ATPPSEPEASPCPSPSPCPTPK. The CCHC FOG-type 1 zinc-finger motif lies at 202–235; the sequence is LLKPARFMCLPCGIAFSSPSTLEAHQAYYCSHRI. Zn(2+) is bound by residues Cys-210, Cys-213, His-226, and Cys-231. Positions 239–274 are disordered; the sequence is DEAGSDKSGAGGSGATAGDAAGLTGGSTEPPAKMAR. The segment covering 254 to 266 has biased composition (low complexity); the sequence is TAGDAAGLTGGST. The C2H2-type 1 zinc-finger motif lies at 279–301; that stretch reads YGCTQCSYSADKKVSLNRHMRMH. A disordered region spans residues 304 to 338; the sequence is SPAAPTLAGLPSLLQNGIAPPGVTPNPMEDSSSQQ. The CCHC FOG-type 2 zinc-finger motif lies at 335–368; that stretch reads SSQQTDRYCSHCDIRFNNIKTYRAHKQHYCSSRR. The Zn(2+) site is built by Cys-343, Cys-346, His-359, and Cys-364. 3 disordered regions span residues 361–413, 504–540, and 601–635; these read QHYC…ARNK, EPERPSAPSSAAEATEAKSSPPEPKRKEAGLTRESAP, and APSLPSSPSMSPSPKRRAISPRSSGAGSASSMSPP. Gly residues predominate over residues 383-394; that stretch reads AGSGPGSAGGSI. Composition is skewed to low complexity over residues 509-523, 602-613, and 620-635; these read SAPSSAAEATEAKSS, PSLPSSPSMSPS, and SPRSSGAGSASSMSPP. 2 CCHC FOG-type zinc fingers span residues 720–753 and 791–824; these read YVKKGVSKCMECNIVFCKYENYLAHKQHYCSARS and PVAYQQLICAACGIKYTSLDNLRAHQNYYCPKGG. The Zn(2+) site is built by Cys-728, Cys-731, His-744, Cys-749, Cys-799, Cys-802, His-815, and Cys-820. 3 C2H2-type zinc fingers span residues 882 to 907, 910 to 932, and 983 to 1006; these read NKCPVCGVVSPTAALAKKHMEMHGTV, YRCSICQYKGNTLRGMRTHIRTH, and FNCDYCNYVSTYKGNVLRHMKLMH. Residues 1011–1073 are disordered; sequence INSPSISPDT…HENNNSPIAT (63 aa). 3 positions are modified to phosphoserine: Ser-1013, Ser-1015, and Ser-1017. The segment covering 1025 to 1040 has biased composition (polar residues); sequence VTSNPTTNQHSNSDVS. The segment at 1113-1146 adopts a CCHC FOG-type 5 zinc-finger fold; the sequence is AAEVMKKYCSTCDISFNYVKTYLAHKQFYCKNKP. Positions 1121, 1124, 1137, and 1142 each coordinate Zn(2+). Ser-1156 carries the post-translational modification Phosphoserine.

The protein belongs to the FOG (Friend of GATA) family. Interacts with pnr, although weak this interaction is essential. Interacts with the isoform SrpNC of srp. Interacts with CtBP corepressor. In terms of tissue distribution, first expressed in stage 5 at high levels in the primordium of the amnioserosa. Also expressed in germ band extending embryos in cells of the developing anterior and posterior midgut and in hemocyte precursors present in the cephalic mesoderm. In embryonic stage 8, it is expressed in blood cell precursors. By stage 10, it is expressed in hemocyte precursors that have spread throughout the lateral and ventral head mesoderm. By stage 11, it is expressed in the dorsal ectoderm and in precursor cells of the hemocytes and fat body. As embryogenesis proceeds, it is also expressed in stage 13 plasmatocytes migrating throughout the head mesoderm and down the ventral midline. By late embryogenesis, expression strongly decreases but remains in the dorsal ectoderm during dorsal closure, in cells within, or associated with, the central nervous system, and in plasmatocytes circulating throughout the embryonic hemolymph. During larval development, it is expressed in primary and secondary lobes of lymph glands. Expressed in the dorsal part of the thoracic imaginal disk.

The protein localises to the nucleus. Its function is as follows. Transcription regulator that modulates expression mediated by transcription factors of the GATA family such as pnr and srp. Represses transcription of proneural achaete-scute complex (AS-C), which is usually activated by pnr. Involved in cardiogenesis, blood, and eye development. During hematopoiesis, it is required to restrict the number of crystal cells, probably via its interaction with the isoform SrpNC of srp. Negatively regulates expression of sr. Probably acts by interacting with the GATA-type zinc finger of proteins such as pnr and srp, possibly antagonizing the interaction between the GATA-type zinc finger and some cofactor. This chain is Zinc finger protein ush (ush), found in Drosophila melanogaster (Fruit fly).